Consider the following 194-residue polypeptide: Translation machinery-associated protein 22 (194 aa).

One can recognise an SUI1 domain in the interval 102–173 (VQIKRVERNK…DVQEWLLELY (72 aa)).

This sequence belongs to the DENR family. In terms of assembly, interacts with the 40S ribosomal subunit.

The protein localises to the cytoplasm. This chain is Translation machinery-associated protein 22 (tma22), found in Neosartorya fischeri (strain ATCC 1020 / DSM 3700 / CBS 544.65 / FGSC A1164 / JCM 1740 / NRRL 181 / WB 181) (Aspergillus fischerianus).